The sequence spans 57 residues: Stress response protein (57 aa).

A Nuclear localization signal motif is present at residues 6–10 (RKERR).

As to expression, mesophyll protoplasts.

It localises to the nucleus. Its function is as follows. Stress response. May play a role in the reentering of protoplasts into the cell cycle. This is Stress response protein from Nicotiana sylvestris (Wood tobacco).